A 492-amino-acid chain; its full sequence is Bifunctional protein GlmU (492 aa).

The tract at residues 1 to 241 (MIPENTGPAA…RWQVEGANDR (241 aa)) is pyrophosphorylase. Residues 14-17 (LAAG), K28, Q81, 86-87 (GT), 112-114 (YGD), G151, E166, N181, and N239 contribute to the UDP-N-acetyl-alpha-D-glucosamine site. A Mg(2+)-binding site is contributed by D114. Residue N239 coordinates Mg(2+). Residues 242-262 (VQLAALGAELNRRTVEAWMRA) form a linker region. Residues 263-492 (GVTVVDPSTT…STPASTEEGK (230 aa)) form an N-acetyltransferase region. UDP-N-acetyl-alpha-D-glucosamine contacts are provided by R344 and K362. H374 functions as the Proton acceptor in the catalytic mechanism. Residues Y377 and N388 each coordinate UDP-N-acetyl-alpha-D-glucosamine. Acetyl-CoA contacts are provided by residues 397–398 (NY), S416, and A434. Residues 460–492 (WVPANRPGSRSAELAQAAINNSSSTPASTEEGK) form a disordered region. Over residues 477–492 (AINNSSSTPASTEEGK) the composition is skewed to polar residues.

In the N-terminal section; belongs to the N-acetylglucosamine-1-phosphate uridyltransferase family. It in the C-terminal section; belongs to the transferase hexapeptide repeat family. Homotrimer. Mg(2+) serves as cofactor.

The protein localises to the cytoplasm. The catalysed reaction is alpha-D-glucosamine 1-phosphate + acetyl-CoA = N-acetyl-alpha-D-glucosamine 1-phosphate + CoA + H(+). The enzyme catalyses N-acetyl-alpha-D-glucosamine 1-phosphate + UTP + H(+) = UDP-N-acetyl-alpha-D-glucosamine + diphosphate. It participates in nucleotide-sugar biosynthesis; UDP-N-acetyl-alpha-D-glucosamine biosynthesis; N-acetyl-alpha-D-glucosamine 1-phosphate from alpha-D-glucosamine 6-phosphate (route II): step 2/2. The protein operates within nucleotide-sugar biosynthesis; UDP-N-acetyl-alpha-D-glucosamine biosynthesis; UDP-N-acetyl-alpha-D-glucosamine from N-acetyl-alpha-D-glucosamine 1-phosphate: step 1/1. It functions in the pathway bacterial outer membrane biogenesis; LPS lipid A biosynthesis. In terms of biological role, catalyzes the last two sequential reactions in the de novo biosynthetic pathway for UDP-N-acetylglucosamine (UDP-GlcNAc). The C-terminal domain catalyzes the transfer of acetyl group from acetyl coenzyme A to glucosamine-1-phosphate (GlcN-1-P) to produce N-acetylglucosamine-1-phosphate (GlcNAc-1-P), which is converted into UDP-GlcNAc by the transfer of uridine 5-monophosphate (from uridine 5-triphosphate), a reaction catalyzed by the N-terminal domain. This is Bifunctional protein GlmU from Pseudarthrobacter chlorophenolicus (strain ATCC 700700 / DSM 12829 / CIP 107037 / JCM 12360 / KCTC 9906 / NCIMB 13794 / A6) (Arthrobacter chlorophenolicus).